The sequence spans 402 residues: Nodal homolog 4-A (402 aa).

Positions 1–18 (MHLYFYCLILLFVPGGNS) are cleaved as a signal peptide. Positions 19–278 (LGINSYLKHM…TIAHTRRHRR (260 aa)) are excised as a propeptide. N-linked (GlcNAc...) asparagine glycosylation is found at Asn37, Asn238, and Asn340. Cystine bridges form between Cys302–Cys368, Cys331–Cys399, and Cys335–Cys401.

Belongs to the TGF-beta family. Homodimer; disulfide-linked. In terms of tissue distribution, during blastula stages, expressed in the endoderm at a higher level dorsally than ventrally. Expressed in the deep cells of the Spemann organizer at the gastrula stage. Expressed in the notochord (a derivative of the organizer) and neural tube during the neural stages.

It is found in the secreted. Cooperation and regulatory loops of multiple nodals are essential for mesendoderm patterning in early embryos. Plays a role in mesoderm formation and may be required for neural development. This Xenopus laevis (African clawed frog) protein is Nodal homolog 4-A (nodal4-a).